We begin with the raw amino-acid sequence, 302 residues long: Homoserine kinase (302 aa).

Residue proline 92–threonine 102 participates in ATP binding.

This sequence belongs to the GHMP kinase family. Homoserine kinase subfamily.

It is found in the cytoplasm. It carries out the reaction L-homoserine + ATP = O-phospho-L-homoserine + ADP + H(+). Its pathway is amino-acid biosynthesis; L-threonine biosynthesis; L-threonine from L-aspartate: step 4/5. Catalyzes the ATP-dependent phosphorylation of L-homoserine to L-homoserine phosphate. The sequence is that of Homoserine kinase from Trichormus variabilis (strain ATCC 29413 / PCC 7937) (Anabaena variabilis).